The following is a 323-amino-acid chain: Methionyl-tRNA formyltransferase (323 aa).

117–120 (SLLP) serves as a coordination point for (6S)-5,6,7,8-tetrahydrofolate.

The protein belongs to the Fmt family.

It carries out the reaction L-methionyl-tRNA(fMet) + (6R)-10-formyltetrahydrofolate = N-formyl-L-methionyl-tRNA(fMet) + (6S)-5,6,7,8-tetrahydrofolate + H(+). Functionally, attaches a formyl group to the free amino group of methionyl-tRNA(fMet). The formyl group appears to play a dual role in the initiator identity of N-formylmethionyl-tRNA by promoting its recognition by IF2 and preventing the misappropriation of this tRNA by the elongation apparatus. This is Methionyl-tRNA formyltransferase from Acidovorax ebreus (strain TPSY) (Diaphorobacter sp. (strain TPSY)).